A 618-amino-acid chain; its full sequence is Dihydroxy-acid dehydratase (618 aa).

Residue Asp81 coordinates Mg(2+). [2Fe-2S] cluster is bound at residue Cys122. 2 residues coordinate Mg(2+): Asp123 and Lys124. Lys124 carries the N6-carboxylysine modification. Position 195 (Cys195) interacts with [2Fe-2S] cluster. Glu491 serves as a coordination point for Mg(2+). Catalysis depends on Ser517, which acts as the Proton acceptor.

This sequence belongs to the IlvD/Edd family. In terms of assembly, homodimer. The cofactor is [2Fe-2S] cluster. Mg(2+) is required as a cofactor.

It catalyses the reaction (2R)-2,3-dihydroxy-3-methylbutanoate = 3-methyl-2-oxobutanoate + H2O. It carries out the reaction (2R,3R)-2,3-dihydroxy-3-methylpentanoate = (S)-3-methyl-2-oxopentanoate + H2O. The protein operates within amino-acid biosynthesis; L-isoleucine biosynthesis; L-isoleucine from 2-oxobutanoate: step 3/4. Its pathway is amino-acid biosynthesis; L-valine biosynthesis; L-valine from pyruvate: step 3/4. In terms of biological role, functions in the biosynthesis of branched-chain amino acids. Catalyzes the dehydration of (2R,3R)-2,3-dihydroxy-3-methylpentanoate (2,3-dihydroxy-3-methylvalerate) into 2-oxo-3-methylpentanoate (2-oxo-3-methylvalerate) and of (2R)-2,3-dihydroxy-3-methylbutanoate (2,3-dihydroxyisovalerate) into 2-oxo-3-methylbutanoate (2-oxoisovalerate), the penultimate precursor to L-isoleucine and L-valine, respectively. The polypeptide is Dihydroxy-acid dehydratase (Dechloromonas aromatica (strain RCB)).